A 343-amino-acid polypeptide reads, in one-letter code: MKNQWKTSDFDYNLPVELIAQRPLADRSGSRLLYIDRSRRTVSHRQFNGFVEQVKPNDLVVLNDTKVIPARLFGHKQTGGKVECLVERILSKDRFLAHIRASKAPKLGSQIIIADNFKIIIEGRYNDLFECVLHSSASILDLLYQHGRIPLPPYIQREPDKDDQARYQTIFAERAGAVAAPTAGLHFNEETFDALRKKGAAITYVTLHVGAGTFQPVRADSLADHRMHHEWMEVSKAVCDAIAKCRKNNGRVIAVGTTVMRCLETATKNGECRPYAGETDLFIYPGFQFNCVDALLTNFHLPKSTLLMLVCAFGGYELVMEAYQKAVENRYRFFSYGDAMLIS.

This sequence belongs to the QueA family. As to quaternary structure, monomer.

It localises to the cytoplasm. It carries out the reaction 7-aminomethyl-7-carbaguanosine(34) in tRNA + S-adenosyl-L-methionine = epoxyqueuosine(34) in tRNA + adenine + L-methionine + 2 H(+). It participates in tRNA modification; tRNA-queuosine biosynthesis. Transfers and isomerizes the ribose moiety from AdoMet to the 7-aminomethyl group of 7-deazaguanine (preQ1-tRNA) to give epoxyqueuosine (oQ-tRNA). This is S-adenosylmethionine:tRNA ribosyltransferase-isomerase from Coxiella burnetii (strain Dugway 5J108-111).